Consider the following 1026-residue polypeptide: Retinoblastoma-related protein 1 (1026 aa).

A domain A region spans residues 416 to 616; sequence TPVSTAMTTA…EKGSSMYNSL (201 aa). Residues 416–872 are pocket; the sequence is TPVSTAMTTA…NEVFIPSVKP (457 aa). The interval 617 to 737 is spacer; that stretch reads AVARPALSVE…PGGGGETCAE (121 aa). Residues 656 to 680 form a disordered region; sequence PVPSLPKPEPMSAQNGDPRSPKRPC. The interval 738-872 is domain B; that stretch reads TGISVFFSKI…NEVFIPSVKP (135 aa). Positions 1007-1026 are disordered; the sequence is QNGSSASSSGAPLKSEQPDS.

This sequence belongs to the retinoblastoma protein (RB) family.

It is found in the nucleus. Regulator of biological processes that recruits a histone deacetylase to control gene transcription. May play a role in the entry into mitosis, negatively regulating the cell proliferation. Formation of stable complexes with geminiviridae replication-associated proteins may create a cellular environment which favors viral DNA replication. This is Retinoblastoma-related protein 1 (RBR1) from Pisum sativum (Garden pea).